The chain runs to 320 residues: Protein EI24 homolog (320 aa).

Transmembrane regions (helical) follow at residues 41–61 (QCFL…KWFI), 94–114 (GLLQ…SFIL), and 175–195 (ILLL…PYIG). Residue Asn217 is glycosylated (N-linked (GlcNAc...) asparagine). The next 3 membrane-spanning stretches (helical) occupy residues 227–247 (LDFF…CVLA), 248–268 (IFFL…PLFV), and 292–312 (LGKL…LSIF).

Belongs to the EI24 (TC 9.B.7) family.

Its subcellular location is the membrane. The chain is Protein EI24 homolog from Arabidopsis thaliana (Mouse-ear cress).